Consider the following 372-residue polypeptide: Protein Wnt-1 (372 aa).

A signal peptide spans 1–29; the sequence is MLKSTQVILIFILLISIVESLSWLALGLA. 3 disulfide bridges follow: Cys77–Cys88, Cys130–Cys138, and Cys140–Cys158. Asn87 carries N-linked (GlcNAc...) asparagine glycosylation. Asn187 carries an N-linked (GlcNAc...) asparagine glycan. Cystine bridges form between Cys225–Cys239, Cys227–Cys234, Cys301–Cys332, Cys317–Cys327, Cys331–Cys371, Cys347–Cys362, Cys349–Cys359, and Cys354–Cys355. A lipid anchor (O-palmitoleoyl serine; by mom-1) is attached at Ser231.

This sequence belongs to the Wnt family. Post-translationally, palmitoleoylation is required for efficient binding to frizzled receptors. Depalmitoleoylation leads to Wnt signaling pathway inhibition. In terms of tissue distribution, expressed in intestine, some head neurons and ventral nerve cord and pharyngeal neurons. Expressed in the tail and weakly expressed in the vulva and body wall muscles. Expressed highly in posterior dorsal and ventral muscle cells.

It localises to the secreted. Its subcellular location is the extracellular space. It is found in the extracellular matrix. The protein resides in the cytoplasm. The protein localises to the cell membrane. Functionally, ligand for members of the frizzled family of seven transmembrane receptors. Probable developmental protein. May be a signaling molecule which affects the development of discrete regions of tissues. Is likely to signal over only few cell diameters. Binds receptor tyrosine kinase cam-1. Together with Wnt ligand cwn-2, regulates the migration of CAN, ALM, BDU and HSN neurons during embryogenesis, the migration of QL and QR neuroblast descendants during larval development, and polarity of ALM neurons. Also acts with the Wnt ligand egl-20 to direct HSN neuron migration. Acts through the Wnt receptor cfz-2 to direct ALM migration. Also plays a role in axon growth and guidance in HSN and male CP neurons. In addition, together with Wnt ligand cwn-2, negatively regulates developmental neurite pruning of AIM neurons probably by acting as a ligand for receptor tyrosine kinase cam-1. Probably by activating the Wnt/Frizzled pathway, may regulate vulva development. May act redundantly with other Wnt ligands such as cwn-2 and mom-2 to control seam cell polarity. The sequence is that of Protein Wnt-1 (cwn-1) from Caenorhabditis elegans.